The sequence spans 118 residues: MSRANVLSLYRRVLRIARSWKAQSSIPKDTDTEKKYITQEARTLFRQNQQITDPESIQRCMEECEARIEIGLHYRNPYPRPTYLPPMGLATQKGRKLRAQQRLRKQAKPVYLQSQDET.

Residues 91 to 118 are disordered; sequence TQKGRKLRAQQRLRKQAKPVYLQSQDET. Positions 93 to 107 are enriched in basic residues; it reads KGRKLRAQQRLRKQA.

This sequence belongs to the complex I LYR family.

The chain is LYR motif containing protein 1 (lyrm1) from Danio rerio (Zebrafish).